The primary structure comprises 72 residues: Small ribosomal subunit protein bS18 (72 aa).

Belongs to the bacterial ribosomal protein bS18 family. As to quaternary structure, part of the 30S ribosomal subunit. Forms a tight heterodimer with protein bS6.

Binds as a heterodimer with protein bS6 to the central domain of the 16S rRNA, where it helps stabilize the platform of the 30S subunit. In Francisella tularensis subsp. novicida (strain U112), this protein is Small ribosomal subunit protein bS18.